The chain runs to 367 residues: MASASRLPPLPALRDFIHMYRLRAKKILSQNYLMDMNITRKIAKHAKVIEKDWVIEIGPGPGGITRAILEAGASRLDVVEIDNRFIPPLQHLAEAADSRMFIHHQDALRTEIGDIWKNETARPESVDWHDSNLPAMHVIGNLPFNIASPLIIKYLRDMSYRRGVWQYGRVPLTLTFQLEVAKRLCSPIACDTRSRISIMSQYVAEPKMVFQISGSCFVPRPQVDVGVVRFVPRKTPLVNTSFEVLEKVCRQVFHYRQKYVTKGLKTLYPEELEDELSDDLLKKCRIDPTTTSIRLGIEQFADLAEGYNEQCIRYPGLFLYDYTNKLHNLEDLSKEPNALPPPVPIFAPAPTIDSADNTWSLKNFNCS.

A mitochondrion-targeting transit peptide spans 1–16; it reads MASASRLPPLPALRDF. Residues 30–33, asparagine 31, leucine 33, glycine 58, glutamate 80, aspartate 106, and asparagine 141 contribute to the S-adenosyl-L-methionine site; that span reads QNYL.

The protein belongs to the class I-like SAM-binding methyltransferase superfamily. rRNA adenine N(6)-methyltransferase family. KsgA subfamily.

Its subcellular location is the mitochondrion. Probable S-adenosyl-L-methionine-dependent methyltransferase which specifically dimethylates mitochondrial 12S rRNA at the conserved stem loop. Also required for basal transcription of mitochondrial DNA. Stimulates transcription independently of the methyltransferase activity. This Caenorhabditis elegans protein is Dimethyladenosine transferase 1, mitochondrial (tfbm-1).